We begin with the raw amino-acid sequence, 314 residues long: Testisin (314 aa).

The first 19 residues, 1–19, serve as a signal peptide directing secretion; the sequence is MGARGALLLALLLARAGLR. A propeptide spanning residues 20-41 is cleaved from the precursor; the sequence is KPESQEAAPLSGPCGRRVITSR. 2 cysteine pairs are disulfide-bonded: Cys-33-Cys-157 and Cys-67-Cys-83. In terms of domain architecture, Peptidase S1 spans 42-286; the sequence is IVGGEDAELG…HFEWIQKLMA (245 aa). Catalysis depends on charge relay system residues His-82 and Asp-137. Asn-167 and Asn-200 each carry an N-linked (GlcNAc...) asparagine glycan. 3 disulfides stabilise this stretch: Cys-171–Cys-244, Cys-204–Cys-223, and Cys-234–Cys-262. The active-site Charge relay system is Ser-238. Asn-273 is a glycosylation site (N-linked (GlcNAc...) asparagine). Ser-288 is lipidated: GPI-anchor amidated serine. Positions 289–314 are cleaved as a propeptide — removed in mature form; that stretch reads GMSQPDPSWPLLFFPLLWALPLLGPV.

Belongs to the peptidase S1 family. As to expression, expressed predominantly in premeiotic testicular germ cells, mostly late pachytene and diplotene spermatocytes.

The protein localises to the cell membrane. Its function is as follows. Could regulate proteolytic events associated with testicular germ cell maturation. The protein is Testisin (PRSS21) of Homo sapiens (Human).